The primary structure comprises 343 residues: Phosphate acyltransferase (343 aa).

The protein belongs to the PlsX family. In terms of assembly, homodimer. Probably interacts with PlsY.

Its subcellular location is the cytoplasm. The enzyme catalyses a fatty acyl-[ACP] + phosphate = an acyl phosphate + holo-[ACP]. It participates in lipid metabolism; phospholipid metabolism. Its function is as follows. Catalyzes the reversible formation of acyl-phosphate (acyl-PO(4)) from acyl-[acyl-carrier-protein] (acyl-ACP). This enzyme utilizes acyl-ACP as fatty acyl donor, but not acyl-CoA. This is Phosphate acyltransferase from Haemophilus ducreyi (strain 35000HP / ATCC 700724).